The primary structure comprises 3071 residues: Intermembrane lipid transfer protein vps1301 (3071 aa).

In terms of domain architecture, Chorein N-terminal spans 2–115 (LEGLVAGLLN…QQALKQEQLD (114 aa)). The SHR-BD domain maps to 2143–2415 (HIEIFSPYII…KYSWDYPCCA (273 aa)).

The protein belongs to the VPS13 family.

The protein resides in the golgi apparatus. Its subcellular location is the trans-Golgi network. Functionally, mediates the transfer of lipids between membranes at organelle contact sites. May play a role in mitochondrial lipid homeostasis, Golgi vesicle transport, reticulophagy, actin cytoskeleton organization and formation of the forespore membrane. This is Intermembrane lipid transfer protein vps1301 from Schizosaccharomyces pombe (strain 972 / ATCC 24843) (Fission yeast).